A 347-amino-acid polypeptide reads, in one-letter code: KRR1 small subunit processome component homolog (347 aa).

A KH domain is found at Gly124 to Asn194. Residues Asn231–Lys246 show a composition bias toward basic residues. The interval Asn231–Ser347 is disordered. Positions Phe271–Phe304 form a coiled coil. Basic and acidic residues-rich tracts occupy residues Leu272–Asp303 and Lys318–Val329. Basic residues predominate over residues Lys337–Ser347.

Belongs to the KRR1 family. As to quaternary structure, monomer. Component of the ribosomal small subunit (SSU) processome.

The protein localises to the nucleus. It localises to the nucleolus. Required for 40S ribosome biogenesis. Involved in nucleolar processing of pre-18S ribosomal RNA and ribosome assembly. Binds to RNA. Required for female germline development, cell viability during eye development and for survival of dividing cells and epithelial cells during early wing disk development. In Drosophila willistoni (Fruit fly), this protein is KRR1 small subunit processome component homolog.